Here is a 617-residue protein sequence, read N- to C-terminus: NADPH-dependent diflavin oxidoreductase 1 (617 aa).

The Flavodoxin-like domain occupies 3–147 (PMILYASETG…AFLPWLQQTL (145 aa)). Residues 9–14 (SETGNA), 56–59 (STHG), 94–103 (LGDSSYERFC), and Glu-129 each bind FMN. The FAD-binding FR-type domain occupies 226–465 (DDWVWATLKK…HIASPTLFLP (240 aa)). FAD is bound by residues 404-407 (RQFS) and 438-441 (GLCS). Residues Thr-479, 534 to 535 (SR), and 540 to 544 (RIYVQ) each bind NADP(+). Trp-617 lines the FAD pocket.

Belongs to the NADPH-dependent diflavin oxidoreductase NDOR1 family. It in the N-terminal section; belongs to the flavodoxin family. This sequence in the C-terminal section; belongs to the flavoprotein pyridine nucleotide cytochrome reductase family. As to quaternary structure, interacts with DRE2; as part of the cytosolic iron-sulfur (Fe-S) protein assembly (CIA) machinery. FAD serves as cofactor. Requires FMN as cofactor.

It is found in the cytoplasm. Its subcellular location is the mitochondrion. It catalyses the reaction 2 oxidized [2Fe-2S]-[protein] + NADPH = 2 reduced [2Fe-2S]-[protein] + NADP(+) + H(+). In terms of biological role, NADPH-dependent reductase which is a central component of the cytosolic iron-sulfur (Fe-S) protein assembly (CIA) machinery. Transfers electrons from NADPH via its FAD and FMN prosthetic groups to the [2Fe-2S] cluster of DRE2, another key component of the CIA machinery. In turn, this reduced cluster provides electrons for assembly of cytosolic iron-sulfur cluster proteins. Positively controls H(2)O(2)-induced cell death. The polypeptide is NADPH-dependent diflavin oxidoreductase 1 (Cryptococcus neoformans var. neoformans serotype D (strain B-3501A) (Filobasidiella neoformans)).